A 372-amino-acid polypeptide reads, in one-letter code: Aminomethyltransferase (372 aa).

This sequence belongs to the GcvT family. In terms of assembly, the glycine cleavage system is composed of four proteins: P, T, L and H.

The enzyme catalyses N(6)-[(R)-S(8)-aminomethyldihydrolipoyl]-L-lysyl-[protein] + (6S)-5,6,7,8-tetrahydrofolate = N(6)-[(R)-dihydrolipoyl]-L-lysyl-[protein] + (6R)-5,10-methylene-5,6,7,8-tetrahydrofolate + NH4(+). Functionally, the glycine cleavage system catalyzes the degradation of glycine. The protein is Aminomethyltransferase of Streptomyces coelicolor (strain ATCC BAA-471 / A3(2) / M145).